Consider the following 155-residue polypeptide: SsrA-binding protein (155 aa).

It belongs to the SmpB family.

Its subcellular location is the cytoplasm. Functionally, required for rescue of stalled ribosomes mediated by trans-translation. Binds to transfer-messenger RNA (tmRNA), required for stable association of tmRNA with ribosomes. tmRNA and SmpB together mimic tRNA shape, replacing the anticodon stem-loop with SmpB. tmRNA is encoded by the ssrA gene; the 2 termini fold to resemble tRNA(Ala) and it encodes a 'tag peptide', a short internal open reading frame. During trans-translation Ala-aminoacylated tmRNA acts like a tRNA, entering the A-site of stalled ribosomes, displacing the stalled mRNA. The ribosome then switches to translate the ORF on the tmRNA; the nascent peptide is terminated with the 'tag peptide' encoded by the tmRNA and targeted for degradation. The ribosome is freed to recommence translation, which seems to be the essential function of trans-translation. This is SsrA-binding protein from Geobacillus kaustophilus (strain HTA426).